Reading from the N-terminus, the 232-residue chain is Phosphatidylserine decarboxylase proenzyme (232 aa).

S190 functions as the Schiff-base intermediate with substrate; via pyruvic acid in the catalytic mechanism. S190 carries the pyruvic acid (Ser); by autocatalysis modification.

Belongs to the phosphatidylserine decarboxylase family. PSD-A subfamily. Heterodimer of a large membrane-associated beta subunit and a small pyruvoyl-containing alpha subunit. Pyruvate is required as a cofactor. Post-translationally, is synthesized initially as an inactive proenzyme. Formation of the active enzyme involves a self-maturation process in which the active site pyruvoyl group is generated from an internal serine residue via an autocatalytic post-translational modification. Two non-identical subunits are generated from the proenzyme in this reaction, and the pyruvate is formed at the N-terminus of the alpha chain, which is derived from the carboxyl end of the proenzyme. The post-translation cleavage follows an unusual pathway, termed non-hydrolytic serinolysis, in which the side chain hydroxyl group of the serine supplies its oxygen atom to form the C-terminus of the beta chain, while the remainder of the serine residue undergoes an oxidative deamination to produce ammonia and the pyruvoyl prosthetic group on the alpha chain.

Its subcellular location is the cell membrane. The enzyme catalyses a 1,2-diacyl-sn-glycero-3-phospho-L-serine + H(+) = a 1,2-diacyl-sn-glycero-3-phosphoethanolamine + CO2. It functions in the pathway phospholipid metabolism; phosphatidylethanolamine biosynthesis; phosphatidylethanolamine from CDP-diacylglycerol: step 2/2. Its function is as follows. Catalyzes the formation of phosphatidylethanolamine (PtdEtn) from phosphatidylserine (PtdSer). The polypeptide is Phosphatidylserine decarboxylase proenzyme (Brucella anthropi (strain ATCC 49188 / DSM 6882 / CCUG 24695 / JCM 21032 / LMG 3331 / NBRC 15819 / NCTC 12168 / Alc 37) (Ochrobactrum anthropi)).